The following is an 806-amino-acid chain: Volume-regulated anion channel subunit LRRC8E (806 aa).

Residues 1–22 lie on the Cytoplasmic side of the membrane; sequence MIPVAEFKQFTEQQPAFKVLKP. Residues 23 to 43 form a helical membrane-spanning segment; that stretch reads WWDVLAEYITYAMLMIGVFGC. The Extracellular portion of the chain corresponds to 44-130; it reads TLQVTQDKII…YETALHWYAK (87 aa). C54 and C311 are disulfide-bonded. N57 and N80 each carry an N-linked (GlcNAc...) asparagine glycan. The disordered stretch occupies residues 75-104; it reads QSSASNDSDLETTVPPPTATSSPPREMSGL. Residues 131–151 form a helical membrane-spanning segment; it reads YFPYLVVIHTLIFIICGNFWF. At 152–275 the chain is on the cytoplasmic side; it reads KFPGTSSKIE…MRQTVLKVCK (124 aa). The segment at 182 to 217 is disordered; the sequence is EVSGESSQEKPNQERSIDRELSKPNFEEGSPATADL. Over residues 188–207 the composition is skewed to basic and acidic residues; sequence SQEKPNQERSIDRELSKPNF. The chain crosses the membrane as a helical span at residues 276 to 296; that stretch reads FVLITIYNAVLVGKIHFIVPC. The Extracellular segment spans residues 297–323; that stretch reads SVHTEDMTGYNSFCCNHTKAHLFSKLA. N312 carries an N-linked (GlcNAc...) asparagine glycan. Residues 324-344 traverse the membrane as a helical segment; sequence ISYLCFLGVYGLTCFYTLYWL. Topologically, residues 345–806 are cytoplasmic; the sequence is FRRPLKEYSF…VDVRDKFKED (462 aa). 9 LRR repeats span residues 569–589, 593–614, 616–637, 641–662, 664–685, 687–708, 710–731, 733–754, and 756–777; these read HLQKFSIHNDGTKLLTLNALK, LVKELELVRCELERIPHAVFSL, NLQVLDLKENTLHTIEEIISLQ, KLSVLRLWHNQIAYIPDHIRKL, GLEELSLNRNKILVIPSQLFLC, KLRHLDLSFNEIRELPPEIGVL, LLQYLGLSGNFLEDLPTELFFC, KLKTLKLGQNRLASLSPKVGSL, and CLVKLELKGNRMDMLPPEIGNC.

The protein belongs to the LRRC8 family. In terms of assembly, heterohexamer; oligomerizes with other LRRC8 proteins (lrrc8a, lrrc8c, lrrc8d and/or lrrc8b) to form a heterohexamer. Detected in a channel complex that contains lrrc8a, lrrc8c and lrrc8e. In vivo, the subunit composition may depend primarily on expression levels, and heterooligomeric channels containing various proportions of the different LRRC8 proteins may coexist.

It localises to the cell membrane. The protein resides in the endoplasmic reticulum membrane. It is found in the lysosome membrane. The catalysed reaction is chloride(in) = chloride(out). It catalyses the reaction iodide(out) = iodide(in). The enzyme catalyses taurine(out) = taurine(in). It carries out the reaction 2',3'-cGAMP(out) = 2',3'-cGAMP(in). Functionally, non-essential component of the volume-regulated anion channel (VRAC, also named VSOAC channel), an anion channel required to maintain a constant cell volume in response to extracellular or intracellular osmotic changes. The VRAC channel conducts iodide better than chloride and can also conduct organic osmolytes like taurine. Mediates efflux of amino acids, such as aspartate, in response to osmotic stress. The VRAC channel also mediates transport of immunoreactive cyclic dinucleotide GMP-AMP (2'-3'-cGAMP), an immune messenger produced in response to DNA virus in the cytosol. Channel activity requires lrrc8a plus at least one other family member (lrrc8b, lrrc8c, lrrc8d or lrrc8e); channel characteristics depend on the precise subunit composition. Also plays a role in lysosome homeostasis by forming functional lysosomal VRAC channels in response to low cytoplasmic ionic strength condition: lysosomal VRAC channels are necessary for the formation of large lysosome-derived vacuoles, which store and then expel excess water to maintain cytosolic water homeostasis. The sequence is that of Volume-regulated anion channel subunit LRRC8E from Xenopus laevis (African clawed frog).